The following is a 379-amino-acid chain: Cystathionine gamma-lyase (379 aa).

Lys-195 carries the N6-(pyridoxal phosphate)lysine modification.

This sequence belongs to the trans-sulfuration enzymes family. Requires pyridoxal 5'-phosphate as cofactor.

The catalysed reaction is L,L-cystathionine + H2O = 2-oxobutanoate + L-cysteine + NH4(+). It catalyses the reaction L-homocysteine + H2O = 2-oxobutanoate + hydrogen sulfide + NH4(+) + H(+). Its function is as follows. Catalyzes the conversion of cystathionine to cysteine, and homocysteine to sulfide. The polypeptide is Cystathionine gamma-lyase (mccB) (Bacillus subtilis (strain 168)).